A 469-amino-acid polypeptide reads, in one-letter code: UDP-N-acetylmuramate--L-alanine ligase (469 aa).

113–119 lines the ATP pocket; the sequence is GAHGKTT.

It belongs to the MurCDEF family.

It is found in the cytoplasm. It catalyses the reaction UDP-N-acetyl-alpha-D-muramate + L-alanine + ATP = UDP-N-acetyl-alpha-D-muramoyl-L-alanine + ADP + phosphate + H(+). It functions in the pathway cell wall biogenesis; peptidoglycan biosynthesis. Cell wall formation. This Syntrophobacter fumaroxidans (strain DSM 10017 / MPOB) protein is UDP-N-acetylmuramate--L-alanine ligase.